The chain runs to 64 residues: Small ribosomal subunit protein eS17 (64 aa).

The protein belongs to the eukaryotic ribosomal protein eS17 family.

The protein is Small ribosomal subunit protein eS17 of Methanosarcina acetivorans (strain ATCC 35395 / DSM 2834 / JCM 12185 / C2A).